The chain runs to 714 residues: MSRFGGRLREYPQLSIDRFDYDNLRARAYFLSHCHKDHMKGLRAPALRRRLQSSLKVKLYCSPVTKELLLTNSKYAFWENHIVALEVETPTQISLVDETTGEKEDIEVTLLPAGHCPGSVMFLFQGENGTVLYTGDFRLAKGEAARMELLHSGTSVKDIQSVYLDTTFCDPRFYHIPSREECLSGILELVRSWTTLSRYHVVWLNCKAAYGYEYLFINLSEELGIKVHVNKLDMFKNMPEILYHITTDRYTQIHACRHPKDDDYVRGNRLPCGITCQNGTPLHVISIKPSTMWFGERIKKTNVIVRTGESTYRACFSFHSSYSEIMDFLSYIRPVNVYPNVLPVGGSEDKVMEILQPLCRSYRRNTEPRYKPLGTLKRACKRNLSDTDEDELFDTELSARPKIAKYQGEESKPSQTAQPENAERNINESTESYRANTAYTSLKVDFVDCEESNDDDDDDDDDDKEDDSEKNTAQVLSHEPDANSIASCNGIPSNQQESNADIPSWDMFFKCNKVDESSENEDNFPSSADAGGSQSLFSDSDGVSDSTHISSQNSSQSTHISEQGSQGWDSQMDTVLITSQERNAADFSCFSRGGSRTALLSHDTPRDSQADDSRWKLLGQNPSCASDVICDLKSEDCEKDAEAGTAPTQDLLVEISDSSRTPDLELKRDSQSSSDFEIPLTPDAEIPQRDKLHYLYKKLAAGESIMRKNSPEKR.

Disordered stretches follow at residues 391 to 500, 516 to 577, 598 to 617, and 638 to 683; these read ELFD…ESNA, ESSE…TVLI, ALLSHDTPRDSQADDSRWKL, and EKDA…LTPD. The segment covering 427-440 has biased composition (polar residues); the sequence is NESTESYRANTAYT. Residues 447-468 show a composition bias toward acidic residues; sequence VDCEESNDDDDDDDDDDKEDDS. Composition is skewed to polar residues over residues 484–500 and 532–543; these read SIASCNGIPSNQQESNA and GSQSLFSDSDGV. Positions 544–561 are enriched in low complexity; it reads SDSTHISSQNSSQSTHIS. Polar residues predominate over residues 562–577; it reads EQGSQGWDSQMDTVLI. Basic and acidic residues-rich tracts occupy residues 603 to 615 and 660 to 670; these read DTPRDSQADDSRW and RTPDLELKRDS. Ser670 bears the Phosphoserine; by ATM mark.

It belongs to the DNA repair metallo-beta-lactamase (DRMBL) family. In terms of assembly, interacts with PRKDC. Phosphorylation on undefined residues by PRKDC may stimulate endonucleolytic activity on 5' and 3' hairpins and overhangs. PRKDC must remain present, even after phosphorylation, for efficient hairpin opening.

It is found in the nucleus. Required for V(D)J recombination, the process by which exons encoding the antigen-binding domains of immunoglobulins and T-cell receptor proteins are assembled from individual V, (D), and J gene segments. V(D)J recombination is initiated by the lymphoid specific RAG endonuclease complex, which generates site specific DNA double strand breaks (DSBs). These DSBs present two types of DNA end structures: hairpin sealed coding ends and phosphorylated blunt signal ends. These ends are independently repaired by the non homologous end joining (NHEJ) pathway to form coding and signal joints respectively. This protein exhibits single-strand specific 5'-3' exonuclease activity in isolation, and acquires endonucleolytic activity on 5' and 3' hairpins and overhangs when in a complex with PRKDC. The latter activity is required specifically for the resolution of closed hairpins prior to the formation of the coding joint. May also be required for the repair of complex DSBs induced by ionizing radiation, which require substantial end-processing prior to religation by NHEJ. This chain is Protein artemis (DCLRE1C), found in Gallus gallus (Chicken).